Reading from the N-terminus, the 270-residue chain is Shikimate dehydrogenase (NADP(+)) (270 aa).

Shikimate contacts are provided by residues 14–16 and Thr-61; that span reads SKS. The active-site Proton acceptor is the Lys-65. Shikimate is bound by residues Asn-86 and Asp-101. NADP(+) is bound by residues 126–130, 150–155, and Met-215; these read GAGGA and NRTVDK. Tyr-217 contacts shikimate. Gly-238 contributes to the NADP(+) binding site.

Belongs to the shikimate dehydrogenase family. As to quaternary structure, homodimer.

It catalyses the reaction shikimate + NADP(+) = 3-dehydroshikimate + NADPH + H(+). It participates in metabolic intermediate biosynthesis; chorismate biosynthesis; chorismate from D-erythrose 4-phosphate and phosphoenolpyruvate: step 4/7. In terms of biological role, involved in the biosynthesis of the chorismate, which leads to the biosynthesis of aromatic amino acids. Catalyzes the reversible NADPH linked reduction of 3-dehydroshikimate (DHSA) to yield shikimate (SA). The sequence is that of Shikimate dehydrogenase (NADP(+)) from Methylobacillus flagellatus (strain ATCC 51484 / DSM 6875 / VKM B-1610 / KT).